Here is a 349-residue protein sequence, read N- to C-terminus: Glycerol-3-phosphate dehydrogenase [NAD(+)], cytoplasmic (349 aa).

NAD(+) contacts are provided by residues glycine 10–glycine 15, lysine 120, and alanine 153. Residue lysine 120 coordinates substrate. A Phosphoserine modification is found at serine 154. Lysine 204 serves as the catalytic Proton acceptor. Position 269 (arginine 269) interacts with NAD(+). Arginine 269–asparagine 270 contributes to the substrate binding site. Position 289 is an N6-succinyllysine (lysine 289). The NAD(+) site is built by lysine 296 and glutamine 298. Phosphotyrosine is present on tyrosine 326.

This sequence belongs to the NAD-dependent glycerol-3-phosphate dehydrogenase family. In terms of assembly, homodimer.

It localises to the cytoplasm. It carries out the reaction sn-glycerol 3-phosphate + NAD(+) = dihydroxyacetone phosphate + NADH + H(+). Its function is as follows. Has glycerol-3-phosphate dehydrogenase activity. The protein is Glycerol-3-phosphate dehydrogenase [NAD(+)], cytoplasmic (GPD1) of Oryctolagus cuniculus (Rabbit).